Reading from the N-terminus, the 490-residue chain is ATP synthase subunit beta, chloroplastic (490 aa).

170–177 (GGAGVGKT) contacts ATP.

It belongs to the ATPase alpha/beta chains family. In terms of assembly, F-type ATPases have 2 components, CF(1) - the catalytic core - and CF(0) - the membrane proton channel. CF(1) has five subunits: alpha(3), beta(3), gamma(1), delta(1), epsilon(1). CF(0) has four main subunits: a(1), b(1), b'(1) and c(9-12).

The protein resides in the plastid. It is found in the chloroplast thylakoid membrane. The enzyme catalyses ATP + H2O + 4 H(+)(in) = ADP + phosphate + 5 H(+)(out). In terms of biological role, produces ATP from ADP in the presence of a proton gradient across the membrane. The catalytic sites are hosted primarily by the beta subunits. The polypeptide is ATP synthase subunit beta, chloroplastic (Ipomoea setosa (Brazilian morning glory)).